We begin with the raw amino-acid sequence, 210 residues long: MENSEKLANSKEVIAYIAERFPKCFILEGEAKPLKIGIFQDLAERLSDDSKVSKTQLRAGLRQYTSSWRYLHGVKPGASRVDLDGNPCGELEEEHVEHAKASLEESKAKVAARRKEQAKKAREEAKAKKPARATTPPKRRPQPAAVAKKQEKPVETRALNSDEITVGNNVSVNMGKGNMPATIVEINKDDVRIRLSNGLQMVVKAENLRS.

The span at 98–127 (HAKASLEESKAKVAARRKEQAKKAREEAKA) shows a compositional bias: basic and acidic residues. Residues 98 to 155 (HAKASLEESKAKVAARRKEQAKKAREEAKAKKPARATTPPKRRPQPAAVAKKQEKPVE) form a disordered region.

This sequence belongs to the ProQ family.

The protein localises to the cytoplasm. Its function is as follows. RNA chaperone with significant RNA binding, RNA strand exchange and RNA duplexing activities. The polypeptide is RNA chaperone ProQ (Aliivibrio salmonicida (strain LFI1238) (Vibrio salmonicida (strain LFI1238))).